Here is a 1478-residue protein sequence, read N- to C-terminus: Adhesion G protein-coupled receptor L2 (1478 aa).

The first 25 residues, 1–25, serve as a signal peptide directing secretion; that stretch reads MVSSGCRMRSLWFIIIISFLPNTEG. The Extracellular portion of the chain corresponds to 26-855; that stretch reads FSRAALPFGL…VHELLLTVIT (830 aa). One can recognise an SUEL-type lectin domain in the interval 41–130; the sequence is SCEGYSIDLR…KYLEVQYECV (90 aa). An N-linked (GlcNAc...) asparagine glycan is attached at Asn-99. The Olfactomedin-like domain maps to 139-398; that stretch reads VCPGTLKAIV…ILRYSLEFGP (260 aa). A disulfide bond links Cys-140 and Cys-322. Asn-335 carries an N-linked (GlcNAc...) asparagine glycan. The segment at 422-458 is disordered; the sequence is VSTTSTTSQKGPMSTTVAGSQEGSKGTKAPPAVSTTK. Positions 430–445 are enriched in polar residues; that stretch reads QKGPMSTTVAGSQEGS. N-linked (GlcNAc...) asparagine glycosylation is found at Asn-524, Asn-633, Asn-735, Asn-748, Asn-791, Asn-796, and Asn-817. Positions 663–841 constitute a GAIN-B domain; that stretch reads TRVSMPTENI…AILMAHREIA (179 aa). 2 disulfide bridges follow: Cys-792–Cys-823 and Cys-811–Cys-825. The tract at residues 792-841 is GPS; it reads CSFWNYSERTMMGYWSTQGCKLVDTNKTRTTCACSHLTNFAILMAHREIA. The chain crosses the membrane as a helical span at residues 856-876; it reads WVGIVISLVCLAICIFTFCFF. The Cytoplasmic portion of the chain corresponds to 877 to 884; the sequence is RGLQSDRN. The helical transmembrane segment at 885–905 threads the bilayer; the sequence is TIHKNLCINLFIAEFIFLIGI. The Extracellular segment spans residues 906 to 911; it reads DKTKYM. The helical transmembrane segment at 912-932 threads the bilayer; sequence IACPIFAGLLHFFFLAAFAWM. Residues 933–955 lie on the Cytoplasmic side of the membrane; that stretch reads CLEGVQLYLMLVEVFESEYSRKK. Residues 956 to 976 traverse the membrane as a helical segment; sequence YYYVAGYLFPATVVGVSAAID. Residues 977 to 994 lie on the Extracellular side of the membrane; the sequence is YKSYGTEKACWLHVDNYF. The helical transmembrane segment at 995–1015 threads the bilayer; sequence IWSFIGPVTFIILLNIIFLVI. The Cytoplasmic segment spans residues 1016–1056; that stretch reads TLCKMVKHSNTLKPDSSRLENINNYRVCDGYYNTDLPGSWV. A helical transmembrane segment spans residues 1057–1077; it reads LGAFALLCLLGLTWSFGLLFI. At 1078–1081 the chain is on the extracellular side; sequence NEET. A helical transmembrane segment spans residues 1082–1102; it reads IVMAYLFTIFNAFQGVFIFIF. At 1103–1478 the chain is on the cytoplasmic side; the sequence is HCALQKKVRK…EGQMQLVTSL (376 aa). Positions 1378 to 1419 are disordered; it reads AEDHLQSPNRDSLYTSMPNLRDSPYQESSPDMEEDLSPSRRS. Polar residues predominate over residues 1383–1395; it reads QSPNRDSLYTSMP. 3 positions are modified to phosphoserine: Ser-1393, Ser-1428, and Ser-1449.

The protein belongs to the G-protein coupled receptor 2 family. Adhesion G-protein coupled receptor (ADGR) subfamily. As to quaternary structure, heterodimer of 2 chains generated by proteolytic processing; the large extracellular N-terminal fragment and the membrane-bound C-terminal fragment predominantly remain associated and non-covalently linked. Post-translationally, autoproteolytically processed at the GPS region of the GAIN-B domain; this cleavage modulates receptor activity. In terms of tissue distribution, ubiquitously expressed.

It is found in the postsynaptic cell membrane. With respect to regulation, forms a heterodimer of 2 chains generated by proteolytic processing that remain associated through non-covalent interactions mediated by the GAIN-B domain. In the inactivated receptor, the Stachel sequence (also named stalk) is embedded in the GAIN-B domain, where it adopts a beta-strand conformation. On activation, the Stachel moves into the 7 transmembrane region and adopts a twisted hook-shaped configuration that forms contacts within the receptor, leading to coupling of a G-alpha protein, which activates signaling. The cleaved GAIN-B and N-terminal domains can then dissociate from the rest of the receptor. Orphan adhesion G-protein coupled receptor (aGPCR), which mediates synapse specificity. Ligand binding causes a conformation change that triggers signaling via guanine nucleotide-binding proteins (G proteins) and modulates the activity of downstream effectors. Following G-protein coupled receptor activation, associates with cell adhesion molecules that are expressed at the surface of adjacent cells to direct synapse specificity. Specifically mediates the establishment of perforant-path synapses on CA1-region pyramidal neurons in the hippocampus. Localizes to postsynaptic spines in excitatory synapses in the S.lacunosum-moleculare and interacts with presynaptic cell adhesion molecules, such as teneurins, promoting synapse formation. The polypeptide is Adhesion G protein-coupled receptor L2 (ADGRL2) (Bos taurus (Bovine)).